Here is an 833-residue protein sequence, read N- to C-terminus: Leucine--tRNA ligase (833 aa).

The short motif at P41–H52 is the 'HIGH' region element. The 'KMSKS' region signature appears at K610–S614. K613 serves as a coordination point for ATP.

The protein belongs to the class-I aminoacyl-tRNA synthetase family.

It localises to the cytoplasm. It carries out the reaction tRNA(Leu) + L-leucine + ATP = L-leucyl-tRNA(Leu) + AMP + diphosphate. The polypeptide is Leucine--tRNA ligase (Streptococcus pyogenes serotype M18 (strain MGAS8232)).